We begin with the raw amino-acid sequence, 609 residues long: Adagio protein 1 (609 aa).

The span at 1–17 (MEWDSGSDLSADDASSL) shows a compositional bias: low complexity. The segment at 1 to 24 (MEWDSGSDLSADDASSLADDEEGG) is disordered. One can recognise a PAS domain in the interval 32-114 (IPYPVGNLLH…SEIRKCIDEG (83 aa)). S-4a-FMN cysteine is present on cysteine 82. Residues 118–161 (QGELLNFRKDGSPLMNRLRLTPIYGDDDTITHIIGIQFFIETDI) form the PAC domain. The 47-residue stretch at 195–241 (CGLFQLSDEVVSMKILSRLTPRDVASVSSVCRRLYVLTKNEDLWRRV) folds into the F-box domain. Kelch repeat units lie at residues 292–342 (SRCN…SSPP), 345–392 (RWGH…SGLA), 397–445 (RSWH…PAAW), 450–501 (RLGH…TGSG), and 516–564 (RLDH…NIPG).

Belongs to the ADAGIO family. Interacts with NFXL2. Interacts (via N-terminus) with GI and (via Kelch repeats) with ADO3. Component of an E3 ubiquitin ligase SCF(ADO1) complex composed of SKP1A/ASK1 (or SKP1B/ASK2), CUL1, RBX1 and ADO1. Also interacts with SKP1D/ASK4, SKP1K/ASK11, CRY1, PHYB, APRR1 and APRR5, and probably with SKP1N/ASK14 and SKP1S/ASK19. Post-translationally, may be ubiquitinated. Degraded in a proteasome-dependent manner. In terms of processing, FMN binds covalently to cysteine after exposure to blue light and is reversed in the dark. Ubiquitously expressed with higher levels in cotyledons and leaves.

The protein localises to the nucleus. The protein resides in the cytoplasm. It functions in the pathway protein modification; protein ubiquitination. In terms of biological role, component of an E3 ubiquitin ligase complex that plays a central role in blue light-dependent circadian cycles. Acts as a blue light photoreceptor, due to the presence of FMN, that mediates light-regulated protein degradation of critical clock components by targeting them to the proteasome complex. The SCF(ADO1) E3 ubiquitin ligase complex is involved in the regulation of circadian clock-dependent processes including the transition to flowering time, hypocotyl elongation, cotyledons and leaf movement rhythms. APRR1/TOC1 and APRR5, but not 'GIGANTEA', are proteolytic substrates of this ubiquitin ligase complex. Blue light enhances cooperative stabilization of 'GIGANTEA' and ADO1/ZTL, leading to amplification and sharpening of the expression profile of APRR1/TOC1. ADO1/ZTL interacts with ADO3, preventing the interaction of ADO3 with CDF1. In Arabidopsis thaliana (Mouse-ear cress), this protein is Adagio protein 1 (ADO1).